A 327-amino-acid polypeptide reads, in one-letter code: RING-H2 finger protein ATL34 (327 aa).

The N-terminal stretch at 1 to 26 is a signal peptide; the sequence is MTIGKSPILLHHHVIFLLLLVLQVSG. Residues 47-67 traverse the membrane as a helical segment; it reads AVIIAMLMFTLLFSMLACCVC. The RING-type; atypical zinc-finger motif lies at 128–170; sequence CAICLNEFEDEETLRLMPPCSHAFHASCIDVWLSSRSTCPVCR. The tract at residues 280–327 is disordered; the sequence is LSHMKTLPQARSSREGYRSGSVGSERRGKGKEKEFGEGSFDRLKAEMV. Residues 303-327 show a composition bias toward basic and acidic residues; that stretch reads SERRGKGKEKEFGEGSFDRLKAEMV.

This sequence belongs to the RING-type zinc finger family. ATL subfamily.

It is found in the membrane. The enzyme catalyses S-ubiquitinyl-[E2 ubiquitin-conjugating enzyme]-L-cysteine + [acceptor protein]-L-lysine = [E2 ubiquitin-conjugating enzyme]-L-cysteine + N(6)-ubiquitinyl-[acceptor protein]-L-lysine.. It participates in protein modification; protein ubiquitination. This chain is RING-H2 finger protein ATL34 (ATL34), found in Arabidopsis thaliana (Mouse-ear cress).